The following is an 875-amino-acid chain: Probable inorganic carbon transporter subunit DabA (875 aa).

Cys399, Asp401, His581, and Cys596 together coordinate Zn(2+).

This sequence belongs to the inorganic carbon transporter (TC 9.A.2) DabA family. As to quaternary structure, forms a complex with DabB. It depends on Zn(2+) as a cofactor.

It is found in the cell membrane. In terms of biological role, part of an energy-coupled inorganic carbon pump. This is Probable inorganic carbon transporter subunit DabA from Bacillus thuringiensis (strain Al Hakam).